Reading from the N-terminus, the 207-residue chain is Imidazoleglycerol-phosphate dehydratase (207 aa).

The protein belongs to the imidazoleglycerol-phosphate dehydratase family.

It is found in the cytoplasm. The enzyme catalyses D-erythro-1-(imidazol-4-yl)glycerol 3-phosphate = 3-(imidazol-4-yl)-2-oxopropyl phosphate + H2O. The protein operates within amino-acid biosynthesis; L-histidine biosynthesis; L-histidine from 5-phospho-alpha-D-ribose 1-diphosphate: step 6/9. This is Imidazoleglycerol-phosphate dehydratase (hisB) from Azospirillum brasilense.